Reading from the N-terminus, the 193-residue chain is MNFLAHLHLAHLAESSLSGNLLADFVRGNPEESFPPDVVAGIHMHRRIDVLTDNLPEVREAREWFRSETRRVAPITLDVMWDHFLSRHWSQLSPDFPLQEFVCYAREQVMTILPDSPPRFINLNNYLWSEQWLVRYRDMDFIQNVLNGMASRRPRLDALRDSWYDLDAHYDALETRFWQFYPRMMAQASRKAL.

This sequence belongs to the AcpH family.

The catalysed reaction is holo-[ACP] + H2O = apo-[ACP] + (R)-4'-phosphopantetheine + H(+). Functionally, converts holo-ACP to apo-ACP by hydrolytic cleavage of the phosphopantetheine prosthetic group from ACP. In Escherichia coli O7:K1 (strain IAI39 / ExPEC), this protein is Acyl carrier protein phosphodiesterase.